Reading from the N-terminus, the 256-residue chain is Distal membrane-arm assembly complex protein 2 (256 aa).

At S252 the chain carries Phosphoserine.

Belongs to the ATP synthase subunit s family. As to quaternary structure, interacts with incompletely assembled mitochondrial NADH:ubiquinone oxidoreductase complex (complex I).

The protein resides in the mitochondrion. Functionally, required for the assembly of the mitochondrial NADH:ubiquinone oxidoreductase complex (complex I). Involved in the assembly of the distal region of complex I. This chain is Distal membrane-arm assembly complex protein 2, found in Macaca fascicularis (Crab-eating macaque).